The chain runs to 231 residues: Ion-translocating oxidoreductase complex subunit E (231 aa).

6 consecutive transmembrane segments (helical) span residues 18 to 38 (ALVQ…ATNA), 39 to 59 (LGLG…ISTL), 63 to 83 (TPAE…VSAV), 86 to 106 (LINA…PLIV), 125 to 145 (ALSA…MCVL), and 182 to 202 (PFLL…MLAG).

It belongs to the NqrDE/RnfAE family. As to quaternary structure, the complex is composed of six subunits: RsxA, RsxB, RsxC, RsxD, RsxE and RsxG.

It localises to the cell inner membrane. Functionally, part of a membrane-bound complex that couples electron transfer with translocation of ions across the membrane. Required to maintain the reduced state of SoxR. In Escherichia coli (strain SMS-3-5 / SECEC), this protein is Ion-translocating oxidoreductase complex subunit E.